We begin with the raw amino-acid sequence, 244 residues long: Ribosomal RNA small subunit methyltransferase G (244 aa).

S-adenosyl-L-methionine-binding positions include G84, F89, 107–109, 135–136, and R154; these read DST and AE.

Belongs to the methyltransferase superfamily. RNA methyltransferase RsmG family.

It is found in the cytoplasm. Specifically methylates the N7 position of a guanine in 16S rRNA. The chain is Ribosomal RNA small subunit methyltransferase G from Nostoc punctiforme (strain ATCC 29133 / PCC 73102).